The sequence spans 175 residues: Ribosome maturation factor RimM (175 aa).

The 73-residue stretch at 97–169 (EDKFYFHEII…TVRVITPEGL (73 aa)) folds into the PRC barrel domain.

It belongs to the RimM family. In terms of assembly, binds ribosomal protein uS19.

The protein localises to the cytoplasm. An accessory protein needed during the final step in the assembly of 30S ribosomal subunit, possibly for assembly of the head region. Essential for efficient processing of 16S rRNA. May be needed both before and after RbfA during the maturation of 16S rRNA. It has affinity for free ribosomal 30S subunits but not for 70S ribosomes. The chain is Ribosome maturation factor RimM from Christiangramia forsetii (strain DSM 17595 / CGMCC 1.15422 / KT0803) (Gramella forsetii).